The sequence spans 454 residues: Guanine deaminase (454 aa).

Zn(2+)-binding residues include His-82 and His-84. Residues 84–87 (HAPQ), 213–214 (RF), 240–243 (HISE), and Asp-330 contribute to the substrate site. 2 residues coordinate Zn(2+): His-240 and Asp-330. Ser-453 is subject to Phosphoserine.

This sequence belongs to the metallo-dependent hydrolases superfamily. ATZ/TRZ family. In terms of assembly, homodimer. Requires Zn(2+) as cofactor.

It catalyses the reaction guanine + H2O + H(+) = xanthine + NH4(+). It functions in the pathway purine metabolism; guanine degradation; xanthine from guanine: step 1/1. In terms of biological role, catalyzes the hydrolytic deamination of guanine, producing xanthine and ammonia. The chain is Guanine deaminase from Mus musculus (Mouse).